Reading from the N-terminus, the 428-residue chain is ATP-dependent RNA helicase RhlB (428 aa).

Residues 9-37 (QKFSDFALHPLVVEALENKGFQYCTPIQA) carry the Q motif motif. The 180-residue stretch at 40–219 (LPLTLSGRDV…FEQMNNAEYV (180 aa)) folds into the Helicase ATP-binding domain. 53 to 60 (AQTGTGKT) lines the ATP pocket. Positions 165-168 (DEAD) match the DEAD box motif. The Helicase C-terminal domain maps to 245-390 (RLLQTLIEEE…VSKYNSDALL (146 aa)). The interval 394–428 (PAPKRLARTRTGNGPRRNSAPRRSGAPRNNRKRPG) is disordered.

This sequence belongs to the DEAD box helicase family. RhlB subfamily. Component of the RNA degradosome, which is a multiprotein complex involved in RNA processing and mRNA degradation.

Its subcellular location is the cytoplasm. The catalysed reaction is ATP + H2O = ADP + phosphate + H(+). In terms of biological role, DEAD-box RNA helicase involved in RNA degradation. Has RNA-dependent ATPase activity and unwinds double-stranded RNA. The protein is ATP-dependent RNA helicase RhlB of Yersinia pseudotuberculosis serotype O:1b (strain IP 31758).